The following is a 177-amino-acid chain: Ecotin (177 aa).

Residues 1-23 (MQASIQNRIFFGLVVLWSTTVLE) form the signal peptide. A disulfide bridge connects residues Cys83 and Cys122.

It belongs to the protease inhibitor I11 (ecotin) family. As to quaternary structure, homodimer.

The protein localises to the periplasm. In terms of biological role, general inhibitor of family S1 serine proteases. The sequence is that of Ecotin from Prochlorococcus marinus (strain MIT 9313).